Consider the following 358-residue polypeptide: ATP synthase gamma chain, chloroplastic (358 aa).

Residues 1-35 (MAAMLASKQGAFMGRSSFAPAPKGVASRGSLQVVA) constitute a chloroplast transit peptide. The active site involves Cys-123. The cysteines at positions 233 and 239 are disulfide-linked.

The protein belongs to the ATPase gamma chain family. F-type ATPases have 2 components, F(1) - the catalytic core - and F(0) - the membrane proton channel. F(1) has five subunits: alpha(3), beta(3), gamma(1), delta(1), epsilon(1). F(0) has four main subunits: a(1), b(1), b'(1) and c(10-14). The alpha and beta chains form an alternating ring which encloses part of the gamma chain. F(1) is attached to F(0) by a central stalk formed by the gamma and epsilon chains, while a peripheral stalk is formed by the delta, b and b' chains.

It is found in the plastid. It localises to the chloroplast thylakoid membrane. Functionally, f(1)F(0) ATP synthase produces ATP from ADP in the presence of a proton or sodium gradient. F-type ATPases consist of two structural domains, F(1) containing the extramembraneous catalytic core and F(0) containing the membrane proton channel, linked together by a central stalk and a peripheral stalk. During catalysis, ATP synthesis in the catalytic domain of F(1) is coupled via a rotary mechanism of the central stalk subunits to proton translocation. Produces ATP from ADP in the presence of a proton gradient across the membrane. The gamma chain is believed to be important in regulating ATPase activity and the flow of protons through the CF(0) complex. This Chlamydomonas reinhardtii (Chlamydomonas smithii) protein is ATP synthase gamma chain, chloroplastic.